The following is a 370-amino-acid chain: Glutamate 5-kinase (370 aa).

Lys17 is an ATP binding site. Residues Ser57, Asp144, and Asn156 each coordinate substrate. ATP contacts are provided by residues 176-177 (SD) and 220-226 (TGGMVSK). Residues 282–360 (SGTLTLDDGA…SDLPAEMRRP (79 aa)) form the PUA domain.

This sequence belongs to the glutamate 5-kinase family.

Its subcellular location is the cytoplasm. It catalyses the reaction L-glutamate + ATP = L-glutamyl 5-phosphate + ADP. The protein operates within amino-acid biosynthesis; L-proline biosynthesis; L-glutamate 5-semialdehyde from L-glutamate: step 1/2. Functionally, catalyzes the transfer of a phosphate group to glutamate to form L-glutamate 5-phosphate. The sequence is that of Glutamate 5-kinase from Mycolicibacterium gilvum (strain PYR-GCK) (Mycobacterium gilvum (strain PYR-GCK)).